The following is a 96-amino-acid chain: UPF0235 protein KPK_0722 (96 aa).

This sequence belongs to the UPF0235 family.

This Klebsiella pneumoniae (strain 342) protein is UPF0235 protein KPK_0722.